The sequence spans 256 residues: Imidazole glycerol phosphate synthase subunit hisF1 (256 aa).

Active-site residues include D11 and D130.

This sequence belongs to the HisA/HisF family. In terms of assembly, heterodimer of HisH and HisF.

The protein localises to the cytoplasm. The catalysed reaction is 5-[(5-phospho-1-deoxy-D-ribulos-1-ylimino)methylamino]-1-(5-phospho-beta-D-ribosyl)imidazole-4-carboxamide + L-glutamine = D-erythro-1-(imidazol-4-yl)glycerol 3-phosphate + 5-amino-1-(5-phospho-beta-D-ribosyl)imidazole-4-carboxamide + L-glutamate + H(+). It functions in the pathway amino-acid biosynthesis; L-histidine biosynthesis; L-histidine from 5-phospho-alpha-D-ribose 1-diphosphate: step 5/9. IGPS catalyzes the conversion of PRFAR and glutamine to IGP, AICAR and glutamate. The HisF subunit catalyzes the cyclization activity that produces IGP and AICAR from PRFAR using the ammonia provided by the HisH subunit. This chain is Imidazole glycerol phosphate synthase subunit hisF1 (hisF1), found in Parasynechococcus marenigrum (strain WH8102).